A 622-amino-acid chain; its full sequence is Calmodulin-binding protein 60 C (622 aa).

Basic and acidic residues predominate over residues 1–19 (MQTRYMERTNSMREKRKLE). The tract at residues 1–35 (MQTRYMERTNSMREKRKLEEDDNQQQQQQPERKRP) is disordered. A calmodulin-binding region spans residues 10-89 (NSMREKRKLE…RLSERSSPKR (80 aa)). Residues 159 to 282 (EDDDGWSGEE…AFHKKLNKAG (124 aa)) are DNA-binding.

This sequence belongs to the plant ACBP60 protein family. In terms of assembly, interacts with calmodulin (CaM). As to expression, expressed in stems, flowers and root.

The protein resides in the nucleus. Transcription activator that binds DNA in a sequence-specific manner, likely 5'-GAAATTTTGG-3', to promote the expression of target genes. This Arabidopsis thaliana (Mouse-ear cress) protein is Calmodulin-binding protein 60 C.